We begin with the raw amino-acid sequence, 310 residues long: Porphobilinogen deaminase (310 aa).

Residue cysteine 243 is modified to S-(dipyrrolylmethanemethyl)cysteine.

This sequence belongs to the HMBS family. In terms of assembly, monomer. It depends on dipyrromethane as a cofactor.

The enzyme catalyses 4 porphobilinogen + H2O = hydroxymethylbilane + 4 NH4(+). It functions in the pathway porphyrin-containing compound metabolism; protoporphyrin-IX biosynthesis; coproporphyrinogen-III from 5-aminolevulinate: step 2/4. Its function is as follows. Tetrapolymerization of the monopyrrole PBG into the hydroxymethylbilane pre-uroporphyrinogen in several discrete steps. In Methylobacillus flagellatus (strain ATCC 51484 / DSM 6875 / VKM B-1610 / KT), this protein is Porphobilinogen deaminase.